Consider the following 133-residue polypeptide: U-scoloptoxin(11)-Sm1a (133 aa).

The N-terminal stretch at Met1 to Ser19 is a signal peptide.

This sequence belongs to the scoloptoxin-11 family. Contains 10 disulfide bonds. As to expression, expressed by the venom gland.

It localises to the secreted. In Scolopendra morsitans (Tanzanian blue ringleg centipede), this protein is U-scoloptoxin(11)-Sm1a.